A 257-amino-acid polypeptide reads, in one-letter code: Ciliary microtubule associated protein 1B (257 aa).

STPGR repeat units follow at residues 103 to 129 (PGPG…LSAR), 182 to 207 (PGPG…MTGR), and 218 to 243 (PGPG…FGIR).

This sequence belongs to the CIMAP family.

The protein localises to the cell projection. It is found in the cilium. It localises to the flagellum. In Danio rerio (Zebrafish), this protein is Ciliary microtubule associated protein 1B (cimap1b).